Consider the following 75-residue polypeptide: Antimicrobial peptide ctriporin (75 aa).

Residues methionine 1–glycine 22 form the signal peptide. Lysine 41 bears the Lysine amide mark. A propeptide spanning residues glutamate 47 to tyrosine 75 is cleaved from the precursor.

It belongs to the non-disulfide-bridged peptide (NDBP) superfamily. Short antimicrobial peptide (group 4) family. In terms of tissue distribution, expressed by the venom gland.

It localises to the secreted. Its subcellular location is the target cell membrane. Its function is as follows. Antimicrobial peptide that acts by breaking the cell wall. Is active against Gram-positive bacteria, fungi and antibiotic-resistant pathogens: S.aureus (MIC=5 ug/ml), M.luteus (MIC=5 ug/ml), B.thuringiensis (MIC=10 ug/ml), B.subtilis (MIC=10 ug/ml), C.albicans (MIC=20 ug/ml), methicillin-resistant S.aureus (MIC=5-10 ug/ml), and penicillin-resistant S.epidermidis (MIC=10 ug/ml). Also shows potent activity against antibiotic-sensitive and -resistant Acinetobacter baumannii (MIC=10-20 uM). Shows cytolytic activity against human erythrocytes. In vivo, is efficient in curing staphylococcal skin infection in mice, when externally applied. The chain is Antimicrobial peptide ctriporin from Chaerilus tricostatus (Scorpion).